A 101-amino-acid polypeptide reads, in one-letter code: Putative defensin-like protein 253 (101 aa).

Positions 1-23 (MRFASLFVVYCTFMFLDISHVKC) are cleaved as a signal peptide. Intrachain disulfides connect Cys-31/Cys-84, Cys-41/Cys-66, Cys-49/Cys-76, and Cys-64/Cys-78.

Belongs to the DEFL family.

The protein localises to the secreted. This Arabidopsis thaliana (Mouse-ear cress) protein is Putative defensin-like protein 253 (SCRL15).